The following is a 235-amino-acid chain: Exosome complex component Rrp4 (235 aa).

One can recognise an S1 motif domain in the interval 67–139; it reads GDVVIGLIQS…KTRSPLLTVQ (73 aa). Residues 149-205 form the KH domain; the sequence is GKIVEISPAKVPRVIGRKMSMLKTLEEKTECKIFVARNGRIHLECPNEDLEAIAVMA.

The protein belongs to the RRP4 family. In terms of assembly, component of the archaeal exosome complex. Forms a trimer of Rrp4 and/or Csl4 subunits. The trimer associates with a hexameric ring-like arrangement composed of 3 Rrp41-Rrp42 heterodimers.

It is found in the cytoplasm. Its function is as follows. Non-catalytic component of the exosome, which is a complex involved in RNA degradation. Increases the RNA binding and the efficiency of RNA degradation. Confers strong poly(A) specificity to the exosome. The sequence is that of Exosome complex component Rrp4 from Aeropyrum pernix (strain ATCC 700893 / DSM 11879 / JCM 9820 / NBRC 100138 / K1).